Consider the following 302-residue polypeptide: Protoheme IX farnesyltransferase 1 (302 aa).

9 helical membrane passes run 30 to 50 (VVALMLLTVLVGMCLALPGAV), 52 to 72 (LQPLIFGLLGIGMMAGAAAAF), 102 to 122 (ALTFSISLAVLGFVLLYTLVN), 124 to 144 (LTAWLTFASLLGYAVVYTAYL), 152 to 172 (IVVGGLAGAMPPLLGWTSVTG), 178 to 198 (ALLLVIIIFAWTPPHFWALAI), 224 to 244 (CILLYTILLAIACLLPVLVGM), 245 to 265 (CGPLYLVGSTLLSCGFIYKSW), and 282 to 302 (FSIYHLMLLFIVLLVDHYLWV).

It belongs to the UbiA prenyltransferase family. Protoheme IX farnesyltransferase subfamily.

It is found in the cell inner membrane. The enzyme catalyses heme b + (2E,6E)-farnesyl diphosphate + H2O = Fe(II)-heme o + diphosphate. The protein operates within porphyrin-containing compound metabolism; heme O biosynthesis; heme O from protoheme: step 1/1. Converts heme B (protoheme IX) to heme O by substitution of the vinyl group on carbon 2 of heme B porphyrin ring with a hydroxyethyl farnesyl side group. The polypeptide is Protoheme IX farnesyltransferase 1 (Shewanella woodyi (strain ATCC 51908 / MS32)).